The following is an 839-amino-acid chain: LPS-assembly protein LptD (839 aa).

Positions 1-21 (MAIGITACVLSLINYQGLAYS) are cleaved as a signal peptide.

It belongs to the LptD family. Component of the lipopolysaccharide transport and assembly complex. Interacts with LptE and LptA.

It localises to the cell outer membrane. Its function is as follows. Together with LptE, is involved in the assembly of lipopolysaccharide (LPS) at the surface of the outer membrane. The sequence is that of LPS-assembly protein LptD from Legionella pneumophila (strain Paris).